A 332-amino-acid polypeptide reads, in one-letter code: dTDP-3,4-didehydro-2,6-dideoxy-alpha-D-glucose 3-reductase (332 aa).

Residue 12–18 (CASFAWR) coordinates NADP(+). A substrate-binding site is contributed by R19. NADP(+)-binding positions include 37–38 (SR), Y58, L74, and H79. K97 acts as the Proton donor in catalysis. NADP(+) contacts are provided by R165 and D177. 2 residues coordinate substrate: Y235 and T255.

The protein belongs to the Gfo/Idh/MocA family. Monomer.

It catalyses the reaction dTDP-4-dehydro-2,6-dideoxy-alpha-D-glucose + NADP(+) = dTDP-3,4-didehydro-2,6-dideoxy-alpha-D-glucose + NADPH + H(+). Involved in the biosynthesis of forosamine ((4-dimethylamino)-2,3,4,6-tetradeoxy-alpha-D-threo-hexopyranose), a highly deoxygenated sugar component of several bioactive natural products such as the insecticidal spinosyns A and D. Catalyzes the reduction of the C-3 keto moiety of dTDP-3,4-diketo-2,6-dideoxy-alpha-D-glucose to yield dTDP-4-keto-2,6-dideoxy-alpha-D-glucose. NADPH is the better reductant, however NADH can also be used. The polypeptide is dTDP-3,4-didehydro-2,6-dideoxy-alpha-D-glucose 3-reductase (Saccharopolyspora spinosa).